A 229-amino-acid polypeptide reads, in one-letter code: Lipoprotein-releasing system ATP-binding protein LolD (229 aa).

The region spanning 6–229 is the ABC transporter domain; that stretch reads LELDAIERTY…DGHLTPYVPA (224 aa). 42–49 provides a ligand contact to ATP; sequence GPSGSGKS.

This sequence belongs to the ABC transporter superfamily. Lipoprotein translocase (TC 3.A.1.125) family. The complex is composed of two ATP-binding proteins (LolD) and two transmembrane proteins (LolC and LolE).

It is found in the cell inner membrane. Part of the ABC transporter complex LolCDE involved in the translocation of mature outer membrane-directed lipoproteins, from the inner membrane to the periplasmic chaperone, LolA. Responsible for the formation of the LolA-lipoprotein complex in an ATP-dependent manner. The protein is Lipoprotein-releasing system ATP-binding protein LolD of Maricaulis maris (strain MCS10) (Caulobacter maris).